The sequence spans 234 residues: UPF0173 metal-dependent hydrolase Msp_0516 (234 aa).

This sequence belongs to the UPF0173 family.

In Methanosphaera stadtmanae (strain ATCC 43021 / DSM 3091 / JCM 11832 / MCB-3), this protein is UPF0173 metal-dependent hydrolase Msp_0516.